The primary structure comprises 1178 residues: F-box/WD repeat-containing protein A-like protein (1178 aa).

The region spanning 1–208 (MQYVNGMDIV…TLPNLIKYIK (208 aa)) is the START domain. Disordered stretches follow at residues 223–296 (KTPD…NLNE), 569–594 (SLII…DNGI), and 618–649 (SSSS…STFS). Composition is skewed to low complexity over residues 229–293 (NPNL…SNEN) and 571–580 (IINSPPNSNN). One can recognise an F-box domain in the interval 717 to 763 (CSLFDLLPYEMIQYIFTLMDATHLIRMSRTCKYFNRICLDDNIWRDL). A disordered region spans residues 804–841 (KKSNNSSPLSASSSSSSPSPPLLPPPPPPIPQLPDMLL). Over residues 809-820 (SSPLSASSSSSS) the composition is skewed to low complexity. The segment covering 821 to 835 (PSPPLLPPPPPPIPQ) has biased composition (pro residues). 7 WD repeats span residues 886 to 923 (GHKG…CEST), 925 to 979 (RCGA…IEKE), 981 to 1017 (RFLY…ELQM), 1020 to 1059 (IENT…TELV), 1062 to 1100 (GHKG…SAIH), 1104 to 1141 (SHSS…EPNL), and 1146 to 1178 (NNLS…FNSK).

In terms of biological role, substrate recognition component of a SCF (SKP1-CUL1-F-box protein) E3 ubiquitin-protein ligase complex which mediates the ubiquitination and subsequent proteasomal degradation of target proteins. In Dictyostelium discoideum (Social amoeba), this protein is F-box/WD repeat-containing protein A-like protein.